A 328-amino-acid polypeptide reads, in one-letter code: Opticin (328 aa).

The signal sequence occupies residues 1–19 (MKFLAFLSLLSLVLQKAET). N46 is a glycosylation site (N-linked (GlcNAc...) asparagine). Position 69 is a sulfotyrosine (Y69). N80 and N101 each carry an N-linked (GlcNAc...) asparagine glycan. One can recognise an LRRNT domain in the interval 112–149 (LLNSQSSHGLPTCLVCVCLGSSVYCDDADLENIPPLPQ). LRR repeat units follow at residues 150–171 (MTTY…DFKG), 174–195 (KLRR…ALRL), 198–219 (ALQD…PSGI), 244–265 (KLQF…LPLS), 266–286 (LRSL…TFCD), and 296–316 (QLED…PEAY). A disulfide bridge links C285 with C318. An N-linked (GlcNAc...) asparagine glycan is attached at N308.

The protein belongs to the small leucine-rich proteoglycan (SLRP) family. SLRP class III subfamily. In terms of assembly, homodimer. In terms of processing, O-glycosylated. Sulfated on tyrosine residues. Post-translationally, proteolytically cleaved by MMP1, MMP2, MMP3, MMP7, MMP8, MMP9, ADAMTS4, and ADAMTS5. Proteolytically cleaved by MMP13. As to expression, expressed in cartilage (at protein level). Expressed in the vitreous collagen, inner limiting membrane, lens capsule, trabecular meshwork, anterior surface of the iris, the area adjacent to the nonpigmented ciliary epithelium, and weakly expressed in the retina of the eye (at protein level). Expressed in the nonpigmented ciliary epithelium of the eye.

Its subcellular location is the secreted. The protein localises to the extracellular space. It is found in the extracellular matrix. Functionally, inhibits angiogenesis in the vitreous humor of the eye, and therefore represses neovascularization. Binds collagen fibrils. May be involved in collagen fiber organization via regulation of other members of the small leucine-rich repeat proteoglycan superfamily. The chain is Opticin (Optc) from Mus musculus (Mouse).